A 685-amino-acid polypeptide reads, in one-letter code: A-type ATP synthase subunit I (685 aa).

The next 7 helical transmembrane spans lie at V172–P192, E348–P368, V394–G414, L464–I484, L538–Y558, M604–V624, and A626–A646.

This sequence belongs to the V-ATPase 116 kDa subunit family. Has multiple subunits with at least A(3), B(3), C, D, E, F, H, I and proteolipid K(x).

The protein resides in the cell membrane. Component of the A-type ATP synthase that produces ATP from ADP in the presence of a proton gradient across the membrane. The sequence is that of A-type ATP synthase subunit I from Aeropyrum pernix (strain ATCC 700893 / DSM 11879 / JCM 9820 / NBRC 100138 / K1).